A 471-amino-acid polypeptide reads, in one-letter code: Coronin-6 (471 aa).

WD repeat units follow at residues 79–119, 129–169, 173–212, 216–259, and 264–304; these read GHTG…PVRN, GHSK…VLLS, IHPD…VVAE, PHEG…EPVA, and DTSN…PFVH. The segment at 410–433 is disordered; sequence ILDVRPPASPRRSQSASEAPLSQH. Low complexity predominate over residues 419-429; it reads PRRSQSASEAP. Positions 426 to 468 form a coiled coil; it reads SEAPLSQHTLETLLEEIKALRDRVQAQEERITALENMLCELVD.

This chain is Coronin-6 (Coro6), found in Mus musculus (Mouse).